Here is a 371-residue protein sequence, read N- to C-terminus: 4-hydroxy-3-methylbut-2-en-1-yl diphosphate synthase (flavodoxin) (371 aa).

The [4Fe-4S] cluster site is built by Cys272, Cys275, Cys307, and Glu314.

Belongs to the IspG family. Requires [4Fe-4S] cluster as cofactor.

It catalyses the reaction (2E)-4-hydroxy-3-methylbut-2-enyl diphosphate + oxidized [flavodoxin] + H2O + 2 H(+) = 2-C-methyl-D-erythritol 2,4-cyclic diphosphate + reduced [flavodoxin]. The protein operates within isoprenoid biosynthesis; isopentenyl diphosphate biosynthesis via DXP pathway; isopentenyl diphosphate from 1-deoxy-D-xylulose 5-phosphate: step 5/6. Its function is as follows. Converts 2C-methyl-D-erythritol 2,4-cyclodiphosphate (ME-2,4cPP) into 1-hydroxy-2-methyl-2-(E)-butenyl 4-diphosphate. The protein is 4-hydroxy-3-methylbut-2-en-1-yl diphosphate synthase (flavodoxin) of Pseudomonas aeruginosa (strain LESB58).